The primary structure comprises 381 residues: Putative F-box/kelch-repeat protein At3g17570 (381 aa).

The F-box domain maps to 1–45 (MFTDLPRDLETEILSRVPATSLQKLKPTCKRWYTLFKDPEFLKKH). Kelch repeat units follow at residues 151-199 (SYKI…TLKG), 229-281 (LLYQ…KIVE), and 331-379 (RFYI…GGKR).

The chain is Putative F-box/kelch-repeat protein At3g17570 from Arabidopsis thaliana (Mouse-ear cress).